Consider the following 182-residue polypeptide: ATP synthase subunit b, chloroplastic (182 aa).

The helical transmembrane segment at 31–53 threads the bilayer; the sequence is IINISVVLGVLVYFGKGVLSNLL.

Belongs to the ATPase B chain family. F-type ATPases have 2 components, F(1) - the catalytic core - and F(0) - the membrane proton channel. F(1) has five subunits: alpha(3), beta(3), gamma(1), delta(1), epsilon(1). F(0) has four main subunits: a(1), b(1), b'(1) and c(10-14). The alpha and beta chains form an alternating ring which encloses part of the gamma chain. F(1) is attached to F(0) by a central stalk formed by the gamma and epsilon chains, while a peripheral stalk is formed by the delta, b and b' chains.

The protein localises to the plastid. The protein resides in the chloroplast thylakoid membrane. F(1)F(0) ATP synthase produces ATP from ADP in the presence of a proton or sodium gradient. F-type ATPases consist of two structural domains, F(1) containing the extramembraneous catalytic core and F(0) containing the membrane proton channel, linked together by a central stalk and a peripheral stalk. During catalysis, ATP synthesis in the catalytic domain of F(1) is coupled via a rotary mechanism of the central stalk subunits to proton translocation. Its function is as follows. Component of the F(0) channel, it forms part of the peripheral stalk, linking F(1) to F(0). This is ATP synthase subunit b, chloroplastic from Welwitschia mirabilis (Tree tumbo).